We begin with the raw amino-acid sequence, 72 residues long: NAD(P)H-quinone oxidoreductase subunit O (72 aa).

It belongs to the complex I NdhO subunit family. NDH-1 can be composed of about 15 different subunits; different subcomplexes with different compositions have been identified which probably have different functions.

Its subcellular location is the cellular thylakoid membrane. The catalysed reaction is a plastoquinone + NADH + (n+1) H(+)(in) = a plastoquinol + NAD(+) + n H(+)(out). The enzyme catalyses a plastoquinone + NADPH + (n+1) H(+)(in) = a plastoquinol + NADP(+) + n H(+)(out). Its function is as follows. NDH-1 shuttles electrons from an unknown electron donor, via FMN and iron-sulfur (Fe-S) centers, to quinones in the respiratory and/or the photosynthetic chain. The immediate electron acceptor for the enzyme in this species is believed to be plastoquinone. Couples the redox reaction to proton translocation, and thus conserves the redox energy in a proton gradient. Cyanobacterial NDH-1 also plays a role in inorganic carbon-concentration. This Rippkaea orientalis (strain PCC 8801 / RF-1) (Cyanothece sp. (strain PCC 8801)) protein is NAD(P)H-quinone oxidoreductase subunit O.